We begin with the raw amino-acid sequence, 557 residues long: Aerobic glycerol-3-phosphate dehydrogenase (557 aa).

21 to 49 (DVVIVGGGITGAGIALDASNRGMKVALVE) contacts FAD.

The protein belongs to the FAD-dependent glycerol-3-phosphate dehydrogenase family. The cofactor is FAD.

It is found in the cytoplasm. The catalysed reaction is a quinone + sn-glycerol 3-phosphate = dihydroxyacetone phosphate + a quinol. It functions in the pathway polyol metabolism; glycerol degradation via glycerol kinase pathway; glycerone phosphate from sn-glycerol 3-phosphate (aerobic route): step 1/1. The chain is Aerobic glycerol-3-phosphate dehydrogenase (glpD) from Staphylococcus epidermidis (strain ATCC 35984 / DSM 28319 / BCRC 17069 / CCUG 31568 / BM 3577 / RP62A).